Here is a 611-residue protein sequence, read N- to C-terminus: Threonine--tRNA ligase (611 aa).

The tract at residues 1 to 27 (MAGPEPEPVSSAAATTPAPSAPVVLPK) is disordered. Positions 8-24 (PVSSAAATTPAPSAPVV) are enriched in low complexity. A catalytic region spans residues 209 to 502 (DHRRIGKDLD…MTENYAGDYP (294 aa)). Residues Cys-302, His-353, and His-479 each contribute to the Zn(2+) site.

This sequence belongs to the class-II aminoacyl-tRNA synthetase family. As to quaternary structure, homodimer. Requires Zn(2+) as cofactor.

The protein resides in the cytoplasm. It carries out the reaction tRNA(Thr) + L-threonine + ATP = L-threonyl-tRNA(Thr) + AMP + diphosphate + H(+). Functionally, catalyzes the attachment of threonine to tRNA(Thr) in a two-step reaction: L-threonine is first activated by ATP to form Thr-AMP and then transferred to the acceptor end of tRNA(Thr). Also edits incorrectly charged L-seryl-tRNA(Thr). The sequence is that of Threonine--tRNA ligase from Synechococcus sp. (strain CC9605).